We begin with the raw amino-acid sequence, 33 residues long: Photosystem II reaction center protein Psb30 (33 aa).

A helical membrane pass occupies residues 7–27 (IQLGSLTLITLTGPLIIGIIF).

Belongs to the Psb30/Ycf12 family. As to quaternary structure, PSII is composed of 1 copy each of membrane proteins PsbA, PsbB, PsbC, PsbD, PsbE, PsbF, PsbH, PsbI, PsbJ, PsbK, PsbL, PsbM, PsbT, PsbY, PsbZ, Psb30/Ycf12, peripheral proteins of the oxygen-evolving complex and a large number of cofactors. It forms dimeric complexes.

The protein resides in the plastid. It localises to the chloroplast thylakoid membrane. A core subunit of photosystem II (PSII), probably helps stabilize the reaction center. The polypeptide is Photosystem II reaction center protein Psb30 (Euglena gracilis).